An 860-amino-acid polypeptide reads, in one-letter code: Alanine--tRNA ligase (860 aa).

Zn(2+)-binding residues include histidine 563, histidine 567, cysteine 665, and histidine 669.

The protein belongs to the class-II aminoacyl-tRNA synthetase family. It depends on Zn(2+) as a cofactor.

Its subcellular location is the cytoplasm. It carries out the reaction tRNA(Ala) + L-alanine + ATP = L-alanyl-tRNA(Ala) + AMP + diphosphate. Catalyzes the attachment of alanine to tRNA(Ala) in a two-step reaction: alanine is first activated by ATP to form Ala-AMP and then transferred to the acceptor end of tRNA(Ala). Also edits incorrectly charged Ser-tRNA(Ala) and Gly-tRNA(Ala) via its editing domain. The chain is Alanine--tRNA ligase from Vibrio cholerae serotype O1 (strain ATCC 39315 / El Tor Inaba N16961).